The sequence spans 228 residues: Small ribosomal subunit protein uS3 (228 aa).

In terms of domain architecture, KH type-2 spans 39–107; the sequence is TREYLQDKLK…PVHINIEEIR (69 aa).

It belongs to the universal ribosomal protein uS3 family. As to quaternary structure, part of the 30S ribosomal subunit. Forms a tight complex with proteins S10 and S14.

Functionally, binds the lower part of the 30S subunit head. Binds mRNA in the 70S ribosome, positioning it for translation. The sequence is that of Small ribosomal subunit protein uS3 from Pseudomonas putida (strain ATCC 700007 / DSM 6899 / JCM 31910 / BCRC 17059 / LMG 24140 / F1).